The following is an 806-amino-acid chain: Mitogen-activated protein kinase 7 (806 aa).

The segment at 1–23 (MAEPLKEEDGEDGSGEPPGRVKA) is disordered. Ala2 is modified (N-acetylalanine). The interval 2-77 (AEPLKEEDGE…VVSSARRRLT (76 aa)) is required for cytoplasmic targeting. Positions 55-347 (YEIIETIGNG…AAAALRHPFL (293 aa)) constitute a Protein kinase domain. Residues 61 to 69 (IGNGAYGVV) and Lys84 contribute to the ATP site. The tract at residues 78–139 (GQQVAIKKIP…FRSVYVVLDL (62 aa)) is required for binding to MAP2K5. Positions 140–406 (MESDLHQIIH…QQIRFQPSLQ (267 aa)) are necessary for oligomerization. The active-site Proton acceptor is the Asp182. The TXY motif lies at 219–221 (TEY). The may not be required for kinase activity; required to stimulate MEF2C activity stretch occupies residues 407–806 (PVASEPVCPD…LSDLPDLQEP (400 aa)). 2 disordered regions span residues 424 to 473 (APSG…AISD) and 488 to 727 (RSRL…PKGS). The segment covering 433–443 (SPPPALPPCSD) has biased composition (pro residues). Basic and acidic residues-rich tracts occupy residues 502–519 (PEPR…EREE), 527–544 (RAKE…KERG), and 563–573 (DNDRSLLERWT). A Nuclear localization signal motif is present at residues 505-539 (RKPVTAQERQREREEKRRRRQERAKEREKRRQERE). The span at 578 to 592 (PPAPAPAPAPAPAPA) shows a compositional bias: pro residues. Residues 593-603 (PSSAQPTSTPT) are compositionally biased toward low complexity. Residues 627-643 (VCPPPGPVPQPAGPIPA) are compositionally biased toward pro residues. Over residues 647–660 (TAPSTSLLASQSLV) the composition is skewed to polar residues. A compositionally biased stretch (pro residues) spans 678 to 689 (PSGPPPPDPGLT). Residues 693–710 (STSESPDVNLVTQQLSKS) show a composition bias toward polar residues. Ser710 carries the phosphoserine modification. Thr723 carries the phosphothreonine modification.

Belongs to the protein kinase superfamily. CMGC Ser/Thr protein kinase family. MAP kinase subfamily. Interacts with MAP2K5. Forms oligomers. Interacts with MEF2A, MEF2C and MEF2D; the interaction phosphorylates the MEF2s and enhances transcriptional activity of MEF2A, MEF2C but not MEF2D. Interacts with SGK1. Interacts with PML. Interacts (via N-terminal half) with HSP90AB1-CDC37 chaperone complex in resting cells; the interaction is MAP2K5-independent and prevents MAPK7 from ubiquitination and proteasomal degradation. Interacts with STUB1/CHIP; the interaction is enhanced in the presence of IGF1 or MAP2K5 and promotes STUB1/CHIP E3 ligase activity. Mg(2+) is required as a cofactor. In terms of processing, dually phosphorylated on Thr-219 and Tyr-221, which activates the enzyme. As to expression, detected in testis, brain, kidney, lung and heart. Detected in total embryo (at protein level).

It localises to the cytoplasm. The protein resides in the nucleus. It is found in the PML body. The catalysed reaction is L-seryl-[protein] + ATP = O-phospho-L-seryl-[protein] + ADP + H(+). It carries out the reaction L-threonyl-[protein] + ATP = O-phospho-L-threonyl-[protein] + ADP + H(+). With respect to regulation, activated by tyrosine and threonine phosphorylation. Activated in response to hyperosmolarity, hydrogen peroxide, and epidermal growth factor (EGF). Functionally, plays a role in various cellular processes such as proliferation, differentiation and cell survival. The upstream activator of MAPK7 is the MAPK kinase MAP2K5. Upon activation, it translocates to the nucleus and phosphorylates various downstream targets including MEF2C. EGF activates MAPK7 through a Ras-independent and MAP2K5-dependent pathway. As part of the MAPK/ERK signaling pathway, acts as a negative regulator of apoptosis in cardiomyocytes via interaction with STUB1/CHIP and promotion of STUB1-mediated ubiquitination and degradation of ICER-type isoforms of CREM. May have a role in muscle cell differentiation. May be important for endothelial function and maintenance of blood vessel integrity. MAP2K5 and MAPK7 interact specifically with one another and not with MEK1/ERK1 or MEK2/ERK2 pathways. Phosphorylates SGK1 at Ser-78 and this is required for growth factor-induced cell cycle progression. Involved in the regulation of p53/TP53 by disrupting the PML-MDM2 interaction. This chain is Mitogen-activated protein kinase 7 (Mapk7), found in Mus musculus (Mouse).